The primary structure comprises 695 residues: A-kinase anchor protein 17A (695 aa).

Residues 83-112 (VENKSLVKSFLACLDGKTIKLSGFSDILKV) form a PKA-RI and PKA-RII subunit binding domain region. Lys-118 is covalently cross-linked (Glycyl lysine isopeptide (Lys-Gly) (interchain with G-Cter in SUMO1); alternate). Lys-118 participates in a covalent cross-link: Glycyl lysine isopeptide (Lys-Gly) (interchain with G-Cter in SUMO2); alternate. The 110-residue stretch at 147-256 (DTIHLEGLPC…KAVACNIKVS (110 aa)) folds into the RRM domain. The interval 279–337 (QELEQQREEQKRREKEAEERQRAEERKQKELEELERERKREEKLRKREQKQRDRELRRN) is disordered. A PKA-RI-alpha subunit binding domain region spans residues 425 to 454 (LGLQRKERELRERLLSILLSKKPDDSHTHD). The disordered stretch occupies residues 482-695 (TTLHPLGGQP…PSRHRSTWNR (214 aa)). Residue Ser-537 is modified to Phosphoserine. Positions 567 to 585 (VSRKDTRSEQDKCNREPSK) are enriched in basic and acidic residues. 2 stretches are compositionally biased toward basic residues: residues 598 to 609 (RHKRERSRARRA) and 618 to 628 (RKERRPHKKHA). Residues 629–644 (YKDDSPRRRSTSPDHT) show a composition bias toward basic and acidic residues. Ser-633 is subject to Phosphoserine. Composition is skewed to basic residues over residues 645-658 (RSRR…HRRE) and 666-695 (SASR…TWNR).

In terms of assembly, monomer. Component of the spliceosome. Interacts with ZRANB2 and SFRS1/ASF through its Arg/Ser-rich domain. Interacts with RI and RII subunits of PKA. Widely expressed. Found in heart, brain, lung, liver, skeletal muscle, kidney and pancreas. Expressed in activated B-cells and placenta. Expressed in all cell lines tested including Jurkat-TAg, U-937 and HEK293 cells.

The protein resides in the nucleus speckle. Splice factor regulating alternative splice site selection for certain mRNA precursors. Mediates regulation of pre-mRNA splicing in a PKA-dependent manner. This Homo sapiens (Human) protein is A-kinase anchor protein 17A (AKAP17A).